The sequence spans 496 residues: ATP synthase subunit beta (496 aa).

155-162 (GGAGVGKT) contributes to the ATP binding site.

Belongs to the ATPase alpha/beta chains family. In terms of assembly, F-type ATPases have 2 components, CF(1) - the catalytic core - and CF(0) - the membrane proton channel. CF(1) has five subunits: alpha(3), beta(3), gamma(1), delta(1), epsilon(1). CF(0) has three main subunits: a(1), b(2) and c(9-12). The alpha and beta chains form an alternating ring which encloses part of the gamma chain. CF(1) is attached to CF(0) by a central stalk formed by the gamma and epsilon chains, while a peripheral stalk is formed by the delta and b chains.

The protein resides in the cell membrane. It carries out the reaction ATP + H2O + 4 H(+)(in) = ADP + phosphate + 5 H(+)(out). Its function is as follows. Produces ATP from ADP in the presence of a proton gradient across the membrane. The catalytic sites are hosted primarily by the beta subunits. This is ATP synthase subunit beta from Karelsulcia muelleri (strain GWSS) (Sulcia muelleri).